Consider the following 891-residue polypeptide: MDVEFTPSDTNKFEANITKQHQVIELNNQEEQQQPEQQEQPEQQEELKDNNEKIKTSEDSTTTTTTTATITTTGENSISITVTEANNNTNQLNKSTSSSSSLNNNKNEDNKSVTASIAPSSPVIESSAIESAIDSPYISSASVFSNATNNNNNTTTTNVVVPPPQLLESSTENITSAAEITPVTTTTTEETINIPKESIEVQKQLAETTTTAAITTTNSTQVTSTTVTNPDKLKCKMHRSNFIMTQIGGKKFTEMTLEQLLDEDDPQTGMGFKNPGPQGFLEYVGDTAPPPTPPPISTSNTTGKNTGKNSTTGKSEGKKATSNSSNVPPSPVLASSASPSPKLKSSSSSIRNSGAISGTSENGGGGNGSGTISKNTAPTTGNSTTTTTTTTSTTTSSSKDRKSVVQKQSTLGRLQKNEEERRKRKEQKRSRAREKPILIAGIEDLPAECLKMVKKSKIPEDKLIQHLNILLPILRFRTGYNLRHVPIVSSNNSTNSLGSSINKNNSNNTTTTTTTTNTNNKSPEVSTNSLDVNIINQNQNQTNSVQNNQINTSSNVITTNVIPTTTASQSSQAPYHPSHNGNEEDDYDDGSRLENAILPKGTVDLIETDRDVKKLYKNLKQIGSGGFGSVFLAKSTVDKCEIAIKKIAHVSAKAQRTNLNEIGFLNFCKHPNIVSYLRSHLVDDTIWIAMEYMQGGTLTEASQGHTFNESCIAYVAKGMLEGLMYLHAHNIVHRDIKSGNIMMTIDGKIKIVDFGLCVDANERKLVHMAGSPFWMSPEMIRGESYGCPTDIWSFAICLLELANGEPPHRKSSLTAMFTTATEGCAGLDKPERWTEHFTHFLNLCLEMDPSKRSTAEQLLKHPWINLSENPETMKKILAQIFIANVMNHLDN.

Disordered stretches follow at residues 24–70, 85–121, 264–435, 495–526, and 565–588; these read IELN…TATI, ANNNTNQLNKSTSSSSSLNNNKNEDNKSVTASIAPSS, DDPQ…AREK, NSLGSSINKNNSNNTTTTTTTTNTNNKSPEVS, and TTASQSSQAPYHPSHNGNEEDDYD. Over residues 29–41 the composition is skewed to low complexity; the sequence is QEEQQQPEQQEQP. The segment covering 45–58 has biased composition (basic and acidic residues); sequence EELKDNNEKIKTSE. 5 stretches are compositionally biased toward low complexity: residues 61–70, 86–105, 297–314, 322–360, and 379–397; these read TTTTTTTATI, NNNTNQLNKSTSSSSSLNNN, STSNTTGKNTGKNSTTGK, SNSSNVPPSPVLASSASPSPKLKSSSSSIRNSGAISGTS, and TTGNSTTTTTTTTSTTTSS. Residues 422-432 show a composition bias toward basic residues; the sequence is RKRKEQKRSRA. Residues 495–522 are compositionally biased toward low complexity; it reads NSLGSSINKNNSNNTTTTTTTTNTNNKS. One can recognise a Protein kinase domain in the interval 616–864; it reads YKNLKQIGSG…AEQLLKHPWI (249 aa). ATP-binding positions include 622–630 and K645; that span reads IGSGGFGSV. D735 serves as the catalytic Proton acceptor.

The protein belongs to the protein kinase superfamily. STE Ser/Thr protein kinase family. STE20 subfamily. It depends on Mg(2+) as a cofactor.

It carries out the reaction L-seryl-[protein] + ATP = O-phospho-L-seryl-[protein] + ADP + H(+). The catalysed reaction is L-threonyl-[protein] + ATP = O-phospho-L-threonyl-[protein] + ADP + H(+). This Dictyostelium discoideum (Social amoeba) protein is Probable serine/threonine-protein kinase mkcC.